The primary structure comprises 93 residues: YcgL domain-containing protein swp_2294 (93 aa).

The YcgL domain maps to 1–85; it reads MICAVYKSLR…PVVNLLEQHK (85 aa).

The sequence is that of YcgL domain-containing protein swp_2294 from Shewanella piezotolerans (strain WP3 / JCM 13877).